We begin with the raw amino-acid sequence, 628 residues long: Cystathionine gamma-synthase-like enzyme iboG2 (628 aa).

Tyr313 contributes to the substrate binding site. Lys417 carries the N6-(pyridoxal phosphate)lysine modification.

The protein belongs to the trans-sulfuration enzymes family. Pyridoxal 5'-phosphate is required as a cofactor.

Its pathway is secondary metabolite biosynthesis. In terms of biological role, cystathionine gamma-synthase-like enzyme; part of the gene cluster that mediates the biosynthesis of the psychoactive metabolites ibotenic acid and muscimol. The first committed step is glutamate hydroxylation by the 2-oxoglutarate-dependent dioxygenase iboH, and the last step is decarboxylation of ibotenic acid to muscimol by the decarboxylase iboD. The order of the intermediate reactions is somewhat ambiguous. IboA likely activates the carboxylic acid at position 5 to introduce an amide bond, and the flavin monooxygenase iboF generates the N-O bond. There are several options for the latter step. One option is that iboF directly hydroxylates the amide nitrogen formed by iboA to produce a hydroxamic acid species. Another option is that iboF hydroxylates an external N-containing compound, whose resulting N-O bond is subsequently introduced into the hydroxyglutamate scaffold. The paralogous PLP-dependent cystathionine gamma-synthase-like enzymes iboG1 and iboG2 are likely involved in substitution of the OH group at position 3 by the O-N moiety. The first cyclic intermediate is most probably tricholomic acid which is likely desaturated to ibotenic acid by the cytochrome P450 monooxygenase iboC. This is Cystathionine gamma-synthase-like enzyme iboG2 from Amanita muscaria (strain Koide BX008).